The chain runs to 380 residues: MRALIIGVGQCGTKIADLFALVDFDTIALNTSRGDLEYLKHIPHDRRILIGESITGGKGVNANPLLGREAMKRDLPLVMRKIGSIVGYEDVDIFFLTFGFGGGTGAGGTPVLAEALKEEYPDSLVVAIGALPLKEEGIRPTINAAITIDKLSKVADSIIAIDNNKLKESGDDISSAYEKINYTIVERIASLLALVDVPGEQTLDASDLKFVLKAFGSFATVGYAKADASKVKNLSRLIIKSFESEGLYLDANIESALYGLVAIHGPPEVLKASDIFEALDYLTSKIRGKQIFRGFYPDPRERDVEVVTLLSGIYESKSIENIVRTAKEYARSFMQAKSEAETKKKELLTGLPDFDDVYPSLEATGSDDPEGFAEYREVSR.

GTP is bound by residues 10–14 (QCGTK), 103–105 (GTG), Glu136, Asn163, and Asn181. The disordered stretch occupies residues 359 to 380 (PSLEATGSDDPEGFAEYREVSR).

Belongs to the CetZ family.

It localises to the cytoplasm. Functionally, involved in cell shape control. The sequence is that of Tubulin-like protein CetZ from Thermococcus kodakarensis (strain ATCC BAA-918 / JCM 12380 / KOD1) (Pyrococcus kodakaraensis (strain KOD1)).